The primary structure comprises 697 residues: Sodium-dependent phosphate transport protein 2B (697 aa).

A disordered region spans residues 1–45 (MAPWPELENAQPNPGKFIEGASGPQSSIPAKDKEASKTNDNGTPV). Residues 1-91 (MAPWPELENA…WSERDTKGKT (91 aa)) lie on the Cytoplasmic side of the membrane. A helical transmembrane segment spans residues 92–112 (LCIFQGVGKFILLLGFLYLFV). Residues 113–136 (CSLDVLSSAFQLVGGKVAGQFFSN) lie on the Extracellular side of the membrane. The helical transmembrane segment at 137–157 (NSIMSNPVAGLVIGVLVTVMV) threads the bilayer. Over 158 to 213 (QSSSTSSSIIVSMVASSLLTVRAAIPIIMGANIGTSITNTIVALMQAGDRNEFRRA) the chain is Cytoplasmic. Residues 214–234 (FAGATVHDFFNWLSVFVLLPL) form a helical membrane-spanning segment. The Extracellular portion of the chain corresponds to 235–363 (EAATHYLEIL…FVNFSLPDLA (129 aa)). Residues Asn295, Asn308, Asn321, and Asn356 are each glycosylated (N-linked (GlcNAc...) asparagine). Cys303 and Cys350 are disulfide-bonded. Residues 364 to 384 (VGIILLTVSLVVLCGCLIMIV) form a helical membrane-spanning segment. Residues 385-408 (KLLGSVLRGQVATVIKKTLNTDFP) are Cytoplasmic-facing. A helical transmembrane segment spans residues 409–429 (FPFAWLTGYLAILVGAGMTFI). The Extracellular portion of the chain corresponds to 430-486 (VQSSSVFTSAMTPLIGIGVISIERAYPLTLGSNIGTTTTAILAALASPGNTLRSSLQ). Residues 487 to 507 (IALCHFFFNISGILLWYPIPF) form a helical membrane-spanning segment. Residues 508-526 (TRLPIRLAKGLGNISAKYR) lie on the Cytoplasmic side of the membrane. Residues 527-547 (WFAVFYLIFFFFVTPLTVFGL) form a helical membrane-spanning segment. Residues 548–551 (SLAG) lie on the Extracellular side of the membrane. Residues 552 to 572 (WPVLVGVGVPIILLLLLVLCL) form a helical membrane-spanning segment. Topologically, residues 573 to 696 (RMLQFRCPRI…SMKALSNTTV (124 aa)) are cytoplasmic.

This sequence belongs to the SLC34A transporter family. In terms of tissue distribution, highly abundant in the ileum of small intestine, whereas it is almost absent in the duodenum and in the jejunum.

The protein localises to the apical cell membrane. The catalysed reaction is 3 Na(+)(out) + phosphate(out) = 3 Na(+)(in) + phosphate(in). Its function is as follows. Involved in actively transporting phosphate into cells via Na(+) cotransport. This Mus musculus (Mouse) protein is Sodium-dependent phosphate transport protein 2B (Slc34a2).